Here is a 167-residue protein sequence, read N- to C-terminus: Lipoprotein signal peptidase (167 aa).

Transmembrane regions (helical) follow at residues 10-30, 68-88, and 98-118; these read LIWL…KAWV, WQLW…AFWL, and SAVP…DRLM. Residues aspartate 124 and aspartate 142 contribute to the active site. A helical transmembrane segment spans residues 138–158; it reads FNIADSAIVGGAIGIALFGLF.

Belongs to the peptidase A8 family.

Its subcellular location is the cell inner membrane. The enzyme catalyses Release of signal peptides from bacterial membrane prolipoproteins. Hydrolyzes -Xaa-Yaa-Zaa-|-(S,diacylglyceryl)Cys-, in which Xaa is hydrophobic (preferably Leu), and Yaa (Ala or Ser) and Zaa (Gly or Ala) have small, neutral side chains.. It functions in the pathway protein modification; lipoprotein biosynthesis (signal peptide cleavage). Functionally, this protein specifically catalyzes the removal of signal peptides from prolipoproteins. This is Lipoprotein signal peptidase from Xanthomonas campestris pv. campestris (strain 8004).